The sequence spans 307 residues: NAD kinase 1 (307 aa).

Residue aspartate 67 is the Proton acceptor of the active site. NAD(+)-binding positions include 67–68 (DG), 149–150 (NE), arginine 160, aspartate 181, and 192–197 (TCYTSS).

Belongs to the NAD kinase family. A divalent metal cation serves as cofactor.

It is found in the cytoplasm. The enzyme catalyses NAD(+) + ATP = ADP + NADP(+) + H(+). Its function is as follows. Involved in the regulation of the intracellular balance of NAD and NADP, and is a key enzyme in the biosynthesis of NADP. Catalyzes specifically the phosphorylation on 2'-hydroxyl of the adenosine moiety of NAD to yield NADP. Essential for photoheterotrophic growth. Has a significant function in the oxidative pentose phosphate (OPP) pathway for glucose catabolism under photoheterotrophic conditions. Is also involved in cellular redox homeostasis. The protein is NAD kinase 1 of Synechocystis sp. (strain ATCC 27184 / PCC 6803 / Kazusa).